The chain runs to 384 residues: 8-amino-7-oxononanoate synthase (384 aa).

Arg21 lines the substrate pocket. 108-109 lines the pyridoxal 5'-phosphate pocket; the sequence is GF. Position 133 (His133) interacts with substrate. Residues Ser179, His207, and Thr233 each contribute to the pyridoxal 5'-phosphate site. At Lys236 the chain carries N6-(pyridoxal phosphate)lysine. Residue Thr352 coordinates substrate.

Belongs to the class-II pyridoxal-phosphate-dependent aminotransferase family. BioF subfamily. In terms of assembly, homodimer. Pyridoxal 5'-phosphate serves as cofactor.

It catalyses the reaction 6-carboxyhexanoyl-[ACP] + L-alanine + H(+) = (8S)-8-amino-7-oxononanoate + holo-[ACP] + CO2. Its pathway is cofactor biosynthesis; biotin biosynthesis. Its function is as follows. Catalyzes the decarboxylative condensation of pimeloyl-[acyl-carrier protein] and L-alanine to produce 8-amino-7-oxononanoate (AON), [acyl-carrier protein], and carbon dioxide. The chain is 8-amino-7-oxononanoate synthase from Escherichia coli O8 (strain IAI1).